We begin with the raw amino-acid sequence, 1311 residues long: Mitogen-activated protein kinase kinase kinase 19 (1311 aa).

7 disordered regions span residues 85–119 (PDPLQEASQEDLKESNQVTSEHQEREQVHPVSPPD), 250–274 (PLSQSAEFSSSKNHQEVTQEGPVEH), 330–363 (SVKEDTTPTERERDSGYHVSEMQRGGEDSQYLSS), 396–472 (MTPA…NPEM), 486–508 (EGTSKGPARAEPHLQRRKRPAQN), 576–607 (HRPHPSSKFQRRAPLTEKKSTHQTQKPKKQAF), and 734–767 (SKDKGCKDMGGHTEDSVSEPDGQMKSPGNDFLSS). A compositionally biased stretch (polar residues) spans 250 to 261 (PLSQSAEFSSSK). 3 stretches are compositionally biased toward basic and acidic residues: residues 262–274 (NHQEVTQEGPVEH), 330–345 (SVKEDTTPTERERDSG), and 450–464 (LEGHRDIEQNRKIPM). Residues 734-748 (SKDKGCKDMGGHTED) are compositionally biased toward basic and acidic residues. Positions 1044–1307 (WTKGEILGRG…ALQLLKHSFL (264 aa)) constitute a Protein kinase domain. Residues 1050-1058 (LGRGAYGTV) and Lys-1072 contribute to the ATP site. Asp-1169 functions as the Proton acceptor in the catalytic mechanism.

The protein belongs to the protein kinase superfamily. STE Ser/Thr protein kinase family. STE20 subfamily.

The catalysed reaction is L-seryl-[protein] + ATP = O-phospho-L-seryl-[protein] + ADP + H(+). It catalyses the reaction L-threonyl-[protein] + ATP = O-phospho-L-threonyl-[protein] + ADP + H(+). The sequence is that of Mitogen-activated protein kinase kinase kinase 19 (Map3k19) from Mus musculus (Mouse).